The sequence spans 236 residues: Small ribosomal subunit protein mS41 (236 aa).

This sequence belongs to the mitochondrion-specific ribosomal protein mS41 family. Component of the mitochondrial small ribosomal subunit (mt-SSU). Mature N.crassa 74S mitochondrial ribosomes consist of a small (37S) and a large (54S) subunit. The 37S small subunit contains a 16S ribosomal RNA (16S mt-rRNA) and 32 different proteins. The 54S large subunit contains a 23S rRNA (23S mt-rRNA) and 42 different proteins.

It localises to the mitochondrion. In terms of biological role, component of the mitochondrial ribosome (mitoribosome), a dedicated translation machinery responsible for the synthesis of mitochondrial genome-encoded proteins, including at least some of the essential transmembrane subunits of the mitochondrial respiratory chain. The mitoribosomes are attached to the mitochondrial inner membrane and translation products are cotranslationally integrated into the membrane. The chain is Small ribosomal subunit protein mS41 (fyv4) from Neurospora crassa (strain ATCC 24698 / 74-OR23-1A / CBS 708.71 / DSM 1257 / FGSC 987).